A 633-amino-acid polypeptide reads, in one-letter code: Probable potassium transport system protein Kup 2 (633 aa).

12 helical membrane passes run 18–38 (FVGL…TSPL), 61–81 (LISL…VLFL), 107–127 (VPVL…DAMI), 143–163 (ITPA…IVLF), 176–196 (FFGP…VIHI), 211–231 (ALSF…AVFL), 255–275 (WFVL…ALVL), 293–313 (ALLP…QAVI), 345–365 (IYVP…IFSF), 371–391 (LATA…MLAF), 402–422 (FMLA…FLAA), and 429–449 (DGGW…WTWT).

It belongs to the HAK/KUP transporter (TC 2.A.72) family.

It localises to the cell inner membrane. The catalysed reaction is K(+)(in) + H(+)(in) = K(+)(out) + H(+)(out). Its function is as follows. Transport of potassium into the cell. Likely operates as a K(+):H(+) symporter. In Rhizobium etli (strain ATCC 51251 / DSM 11541 / JCM 21823 / NBRC 15573 / CFN 42), this protein is Probable potassium transport system protein Kup 2.